Here is a 609-residue protein sequence, read N- to C-terminus: ATP-dependent lipid A-core flippase (609 aa).

6 helical membrane-spanning segments follow: residues Leu47–Ile67, Ile88–Phe108, Ala167–Val187, Trp190–Ile210, Val279–Gly299, and Gly305–Leu325. One can recognise an ABC transmembrane type-1 domain in the interval Leu47–Lys340. An ABC transporter domain is found at Val372–Ser606. Gly404–Thr411 provides a ligand contact to ATP.

This sequence belongs to the ABC transporter superfamily. Lipid exporter (TC 3.A.1.106) family. Homodimer.

The protein localises to the cell inner membrane. The enzyme catalyses ATP + H2O + lipid A-core oligosaccharideSide 1 = ADP + phosphate + lipid A-core oligosaccharideSide 2.. In terms of biological role, involved in lipopolysaccharide (LPS) biosynthesis. Translocates lipid A-core from the inner to the outer leaflet of the inner membrane. Transmembrane domains (TMD) form a pore in the inner membrane and the ATP-binding domain (NBD) is responsible for energy generation. This Francisella tularensis subsp. holarctica (strain LVS) protein is ATP-dependent lipid A-core flippase.